Reading from the N-terminus, the 548-residue chain is mRNA cleavage and polyadenylation factor CLP1 (548 aa).

ATP is bound by residues Glu19, Lys60, and 123-128 (SSGKTT). Residues 437-481 (ESEVKEEVKEEKNEKDGEIKQDGEGEKKGEGKGEGEGEGEGKYGE) are compositionally biased toward basic and acidic residues. The tract at residues 437–500 (ESEVKEEVKE…DEEEVPFREE (64 aa)) is disordered. Residues 482 to 494 (EEGEAEGEDDEEE) show a composition bias toward acidic residues.

It belongs to the Clp1 family. Clp1 subfamily. As to quaternary structure, component of a pre-mRNA cleavage factor complex. Interacts directly with PCF11.

It localises to the nucleus. Required for endonucleolytic cleavage during polyadenylation-dependent pre-mRNA 3'-end formation. This chain is mRNA cleavage and polyadenylation factor CLP1, found in Cryptococcus neoformans var. neoformans serotype D (strain B-3501A) (Filobasidiella neoformans).